A 754-amino-acid chain; its full sequence is Pentatricopeptide repeat-containing protein At3g53700, chloroplastic (754 aa).

Residues 1-72 constitute a chloroplast transit peptide; the sequence is MAFSSCLKFY…DSAALRLFNL (72 aa). 17 PPR repeats span residues 82 to 116, 117 to 152, 153 to 187, 188 to 222, 223 to 257, 258 to 288, 294 to 328, 329 to 363, 364 to 398, 399 to 433, 434 to 468, 469 to 503, 504 to 538, 539 to 573, 574 to 608, 609 to 643, and 645 to 680; these read EPAL…RCEM, GTST…GLKP, DTHF…GIKP, DVST…GLVP, DEKT…GCSW, SNVS…MSNQ, DQYT…GYDP, DVYT…DCSP, NTVT…GILP, DVCT…GCEP, DEFT…GCAR, SVIT…GVSR, NSVT…GQKP, DKYT…GCEP, DIVT…GINL, TPHA…NEAP, and DAVS…GFVP.

Belongs to the PPR family. P subfamily.

The protein localises to the plastid. It localises to the chloroplast. May be involved in female gametophyte development. In Arabidopsis thaliana (Mouse-ear cress), this protein is Pentatricopeptide repeat-containing protein At3g53700, chloroplastic (MEE40).